Consider the following 686-residue polypeptide: Mannan-binding lectin serine protease 2 (686 aa).

The first 15 residues, 1–15, serve as a signal peptide directing secretion; the sequence is MRLLTLLGLLCGSVA. The region spanning 16 to 137 is the CUB 1 domain; that stretch reads TPLGPKWPEP…TGFEAFYAAE (122 aa). 8 residues coordinate Ca(2+): Glu-67, Asp-75, Asp-120, Ser-122, Asn-123, Asp-138, Ile-139, and Glu-141. A disulfide bond links Cys-72 and Cys-90. The EGF-like; calcium-binding domain maps to 138 to 181; the sequence is DIDECQVAPGEAPTCDHHCHNHLGGFYCSCRAGYVLHRNKRTCS. Cystine bridges form between Cys-142/Cys-156, Cys-152/Cys-165, Cys-167/Cys-180, Cys-184/Cys-211, Cys-241/Cys-259, Cys-300/Cys-348, Cys-328/Cys-361, Cys-366/Cys-412, Cys-396/Cys-430, Cys-434/Cys-552, Cys-598/Cys-618, and Cys-629/Cys-660. Positions 158, 159, and 162 each coordinate Ca(2+). Asn-158 is subject to (3R)-3-hydroxyasparagine. Residues 184–296 enclose the CUB 2 domain; it reads CSGQVFTQRS…TGWKIHYTST (113 aa). 2 consecutive Sushi domains span residues 298 to 363 and 364 to 432; these read QPCP…ACSI and VDCG…VCEP. The Peptidase S1 domain occupies 445–684; sequence IYGGQKAKPG…YIPWIENIIS (240 aa). Residues His-483 and Asp-532 each act as charge relay system in the active site. The active-site Charge relay system is the Ser-633.

It belongs to the peptidase S1 family. In terms of assembly, homodimer; disulfide-linked. Binds MBL2. Isoform 2 binds to MASP1. Binds SERPING1. Dimerization and MBL2 binding requires calcium ions. The iron and 2-oxoglutarate dependent 3-hydroxylation of aspartate and asparagine is (R) stereospecific within EGF domains. In terms of processing, activated by cleavage after Arg-444. The uncleaved zymogen is inactive towards synthetic substrates, but has sufficient activity to effect autocatalytic cleavage. Plasma.

It localises to the secreted. It catalyses the reaction Selective cleavage after Arg-223 in complement component C2 (-Ser-Leu-Gly-Arg-|-Lys-Ile-Gln-Ile) and after Arg-76 in complement component C4 (-Gly-Leu-Gln-Arg-|-Ala-Leu-Glu-Ile).. Its function is as follows. Serum protease that plays an important role in the activation of the complement system via mannose-binding lectin. After activation by auto-catalytic cleavage it cleaves C2 and C4, leading to their activation and to the formation of C3 convertase. The chain is Mannan-binding lectin serine protease 2 (MASP2) from Homo sapiens (Human).